The primary structure comprises 233 residues: Large ribosomal subunit protein uL1 (233 aa).

It belongs to the universal ribosomal protein uL1 family. In terms of assembly, part of the 50S ribosomal subunit.

Binds directly to 23S rRNA. The L1 stalk is quite mobile in the ribosome, and is involved in E site tRNA release. Its function is as follows. Protein L1 is also a translational repressor protein, it controls the translation of the L11 operon by binding to its mRNA. This Buchnera aphidicola subsp. Baizongia pistaciae (strain Bp) protein is Large ribosomal subunit protein uL1.